The chain runs to 135 residues: Beta/delta-urticatoxin-Ui2a (135 aa).

Positions 1–18 are cleaved as a signal peptide; the sequence is MGAIVLVAIMALVASSSA. The propeptide occupies 19 to 72; it reads FSDDEQNMMNAEGEKGIRSYSAADDVSDMIESLFVNSGNRNLVLMMLSGRPQPN. Intrachain disulfides connect Cys75/Cys92, Cys82/Cys97, Cys91/Cys105, Cys107/Cys121, Cys114/Cys126, and Cys120/Cys134.

The protein belongs to the urticatoxin-2 family. As to expression, expressed in trichomes, that are stiff epidermal hairs located on the surface of petioles and leaves.

The protein localises to the secreted. In terms of biological role, plant defense neurotoxin that causes pain and systemic symptoms in mammals via modulation of voltage-gated sodium channels (Nav). Potent modulator of human Nav1.5/SCN5A (EC(50)=55 nM), Nav1.6/SCN8A (EC(50)=0.86 nM), and Nav1.7/SCN9A (EC(50)=208 nM), where it shifts the activation threshold to more negative potentials and delays fast inactivation. Also shifts the voltage-dependence of steady-state fast inactivation of Nav1.6/SCN8A, but not that of Nav1.5/SCN5A or Nav1.7/SCN9A. On Nav1.7/SCN9A, principally acts by binding to extracellular loops of domain IV (Nav site 3). In vivo, intraplantar injection into mice causes numerous dose-dependent, immediate, and long-lasting spontaneous pain behaviors, while no swelling is observed in the injected paw. At the highest doses tested, systemic symptoms including hypokinesia and hypersalivation are observed. The chain is Beta/delta-urticatoxin-Ui2a from Urtica incisa (Scrub nettle).